Consider the following 248-residue polypeptide: Putative glutamine amidotransferase-like protein C13C5.04 (248 aa).

Residues Pro-13–Phe-217 form the Glutamine amidotransferase type-1 domain.

The protein is Putative glutamine amidotransferase-like protein C13C5.04 of Schizosaccharomyces pombe (strain 972 / ATCC 24843) (Fission yeast).